A 105-amino-acid polypeptide reads, in one-letter code: uncharacterized protein (105 aa).

A run of 2 helical transmembrane segments spans residues 56–76 (ALIW…VLII) and 85–105 (INLN…GVFY).

The protein localises to the membrane. This is an uncharacterized protein from Aedes vexans (Inland floodwater mosquito).